Here is a 104-residue protein sequence, read N- to C-terminus: Ig kappa chain b5 variant C region (104 aa).

The Ig-like domain maps to 5–100 (PTVLIFPPSP…SGSPVVQSFS (96 aa)). A disulfide bond links cysteine 26 and cysteine 85.

This chain is Ig kappa chain b5 variant C region, found in Oryctolagus cuniculus (Rabbit).